A 157-amino-acid polypeptide reads, in one-letter code: MSSVVETVTNLVTPILDENHFELVDVEFVKEGKSWYLRVYIDKPNGINIEECALVSDKLSEKLDSCDPDPIPQAYYLEVSSPGAERPLKKEKDYERALNKYIHISLYQAIDGQKVYEGTMVDLNKETLTLEYRVKTRTVTKTFDRNKIAKARLAIKF.

Belongs to the RimP family.

It localises to the cytoplasm. Required for maturation of 30S ribosomal subunits. The polypeptide is Ribosome maturation factor RimP (Ligilactobacillus salivarius (strain UCC118) (Lactobacillus salivarius)).